A 681-amino-acid polypeptide reads, in one-letter code: Methionine--tRNA ligase (681 aa).

The short motif at 14–24 is the 'HIGH' region element; the sequence is PYANGSIHLGH. The Zn(2+) site is built by C145, C148, C158, and C161. The short motif at 331–335 is the 'KMSKS' region element; that stretch reads KMSKS. Residue K334 coordinates ATP. A tRNA-binding domain is found at 579-681; the sequence is AFAAIDLRVA…SGAKPGQRIK (103 aa).

Belongs to the class-I aminoacyl-tRNA synthetase family. MetG type 1 subfamily. Homodimer. It depends on Zn(2+) as a cofactor.

It is found in the cytoplasm. The enzyme catalyses tRNA(Met) + L-methionine + ATP = L-methionyl-tRNA(Met) + AMP + diphosphate. Its function is as follows. Is required not only for elongation of protein synthesis but also for the initiation of all mRNA translation through initiator tRNA(fMet) aminoacylation. The polypeptide is Methionine--tRNA ligase (Pseudomonas fluorescens (strain ATCC BAA-477 / NRRL B-23932 / Pf-5)).